The sequence spans 251 residues: 2,3-bisphosphoglycerate-dependent phosphoglycerate mutase (251 aa).

Residues 11–18 (RHGESDWN), 24–25 (TG), Arg-63, 90–93 (ERHY), Lys-101, 117–118 (RR), and 184–185 (GN) contribute to the substrate site. His-12 functions as the Tele-phosphohistidine intermediate in the catalytic mechanism. Glu-90 acts as the Proton donor/acceptor in catalysis.

The protein belongs to the phosphoglycerate mutase family. BPG-dependent PGAM subfamily.

It carries out the reaction (2R)-2-phosphoglycerate = (2R)-3-phosphoglycerate. The protein operates within carbohydrate degradation; glycolysis; pyruvate from D-glyceraldehyde 3-phosphate: step 3/5. Its function is as follows. Catalyzes the interconversion of 2-phosphoglycerate and 3-phosphoglycerate. This chain is 2,3-bisphosphoglycerate-dependent phosphoglycerate mutase, found in Mycobacterium ulcerans (strain Agy99).